The following is a 164-amino-acid chain: Arginine repressor (164 aa).

This sequence belongs to the ArgR family.

It is found in the cytoplasm. Its pathway is amino-acid biosynthesis; L-arginine biosynthesis [regulation]. Functionally, regulates arginine biosynthesis genes. This Mycobacterium avium (strain 104) protein is Arginine repressor.